We begin with the raw amino-acid sequence, 358 residues long: Fructose-bisphosphate aldolase 5, cytosolic (358 aa).

S2 bears the N-acetylserine mark. R39 provides a ligand contact to substrate. C68 carries the post-translational modification S-glutathionyl cysteine; transient. The residue at position 173 (C173) is an S-glutathionyl cysteine; transient; alternate. Residue C173 is modified to S-nitrosocysteine; transient; alternate. E183 functions as the Proton acceptor in the catalytic mechanism. K225 serves as the catalytic Schiff-base intermediate with dihydroxyacetone-P. Residues 266–268 (SGG) and R298 contribute to the substrate site. The residue at position 350 (S350) is a Phosphoserine.

It belongs to the class I fructose-bisphosphate aldolase family. In terms of assembly, homotetramer. Interacts with TRX3. In terms of processing, S-glutathionylated at Cys-68 and Cys-173. Post-translationally, S-nitrosylated at Cys-173. Expressed in rosette leaves and cauline leaves.

The protein localises to the cytoplasm. The protein resides in the cytosol. The catalysed reaction is beta-D-fructose 1,6-bisphosphate = D-glyceraldehyde 3-phosphate + dihydroxyacetone phosphate. It participates in carbohydrate degradation; glycolysis; D-glyceraldehyde 3-phosphate and glycerone phosphate from D-glucose: step 4/4. Its function is as follows. Fructose-bisphosphate aldolase that plays a key role in glycolysis and gluconeogenesis. The chain is Fructose-bisphosphate aldolase 5, cytosolic from Arabidopsis thaliana (Mouse-ear cress).